The chain runs to 192 residues: Crossover junction endodeoxyribonuclease RuvC (192 aa).

Active-site residues include Asp8, Glu67, and Asp139. The Mg(2+) site is built by Asp8, Glu67, and Asp139.

The protein belongs to the RuvC family. Homodimer which binds Holliday junction (HJ) DNA. The HJ becomes 2-fold symmetrical on binding to RuvC with unstacked arms; it has a different conformation from HJ DNA in complex with RuvA. In the full resolvosome a probable DNA-RuvA(4)-RuvB(12)-RuvC(2) complex forms which resolves the HJ. Mg(2+) is required as a cofactor.

It is found in the cytoplasm. The catalysed reaction is Endonucleolytic cleavage at a junction such as a reciprocal single-stranded crossover between two homologous DNA duplexes (Holliday junction).. In terms of biological role, the RuvA-RuvB-RuvC complex processes Holliday junction (HJ) DNA during genetic recombination and DNA repair. Endonuclease that resolves HJ intermediates. Cleaves cruciform DNA by making single-stranded nicks across the HJ at symmetrical positions within the homologous arms, yielding a 5'-phosphate and a 3'-hydroxyl group; requires a central core of homology in the junction. The consensus cleavage sequence is 5'-(A/T)TT(C/G)-3'. Cleavage occurs on the 3'-side of the TT dinucleotide at the point of strand exchange. HJ branch migration catalyzed by RuvA-RuvB allows RuvC to scan DNA until it finds its consensus sequence, where it cleaves and resolves the cruciform DNA. The sequence is that of Crossover junction endodeoxyribonuclease RuvC from Haemophilus ducreyi (strain 35000HP / ATCC 700724).